The following is a 302-amino-acid chain: D-alanine--D-alanine ligase (302 aa).

The ATP-grasp domain occupies 99–298 (KRLFVAEGIP…FEQLIQRIID (200 aa)). Residue 128-183 (LAALGSPVVVKPADGGSTVGVTIAREAGHLPEAVRLALQYSPQVLIEQYIPGQEIT) participates in ATP binding. Residues Asp-252, Glu-265, and Asn-267 each coordinate Mg(2+).

It belongs to the D-alanine--D-alanine ligase family. Requires Mg(2+) as cofactor. The cofactor is Mn(2+).

The protein localises to the cytoplasm. The enzyme catalyses 2 D-alanine + ATP = D-alanyl-D-alanine + ADP + phosphate + H(+). The protein operates within cell wall biogenesis; peptidoglycan biosynthesis. In terms of biological role, cell wall formation. The protein is D-alanine--D-alanine ligase of Gloeobacter violaceus (strain ATCC 29082 / PCC 7421).